Reading from the N-terminus, the 342-residue chain is Aquaporin-8 (342 aa).

A run of 3 helical transmembrane segments spans residues 55–75 (FLAV…AIFT), 98–118 (VAGG…FAVL), and 126–146 (CIFY…TMFA). The NPA 1 motif lies at 108–110 (NPA). The N-linked (GlcNAc...) asparagine glycan is linked to Asn-166. The next 2 membrane-spanning stretches (helical) occupy residues 184–204 (TAFA…LAMC) and 215–235 (FLPI…SYNA). The NPA 2 motif lies at 240-242 (NPS). Residues 266 to 286 (YTWFFVPVLGSHCGAIIGGAI) form a helical membrane-spanning segment. Residues 302 to 327 (TNSVSSMSYNEDNSTLTKRKQVSNIV) are compositionally biased toward polar residues. The disordered stretch occupies residues 302 to 342 (TNSVSSMSYNEDNSTLTKRKQVSNIVHDSKGAKGSSTAPVN). Asn-314 carries N-linked (GlcNAc...) asparagine glycosylation.

This sequence belongs to the MIP/aquaporin (TC 1.A.8) family.

The protein resides in the cell membrane. In terms of biological role, aquaglyceroporin that may modulate the water content and osmolytes during anhydrobiosis. The sequence is that of Aquaporin-8 from Milnesium tardigradum (Water bear).